The chain runs to 301 residues: Oxygen-dependent coproporphyrinogen-III oxidase (301 aa).

The segment at V49–K58 is important for dimerization. A substrate-binding site is contributed by S93. H107 functions as the Proton donor in the catalytic mechanism. Residues N109 to R111 and G259 to R261 contribute to the substrate site. The tract at residues Y241–G276 is important for dimerization.

This sequence belongs to the aerobic coproporphyrinogen-III oxidase family. In terms of assembly, homodimer.

The protein localises to the cytoplasm. It catalyses the reaction coproporphyrinogen III + O2 + 2 H(+) = protoporphyrinogen IX + 2 CO2 + 2 H2O. It functions in the pathway porphyrin-containing compound metabolism; protoporphyrin-IX biosynthesis; protoporphyrinogen-IX from coproporphyrinogen-III (O2 route): step 1/1. In terms of biological role, involved in the heme biosynthesis. Catalyzes the aerobic oxidative decarboxylation of propionate groups of rings A and B of coproporphyrinogen-III to yield the vinyl groups in protoporphyrinogen-IX. This chain is Oxygen-dependent coproporphyrinogen-III oxidase, found in Leishmania major.